The chain runs to 123 residues: Small ribosomal subunit protein uS12 (123 aa).

Asp-89 bears the 3-methylthioaspartic acid mark.

This sequence belongs to the universal ribosomal protein uS12 family. As to quaternary structure, part of the 30S ribosomal subunit. Contacts proteins S8 and S17. May interact with IF1 in the 30S initiation complex.

With S4 and S5 plays an important role in translational accuracy. Its function is as follows. Interacts with and stabilizes bases of the 16S rRNA that are involved in tRNA selection in the A site and with the mRNA backbone. Located at the interface of the 30S and 50S subunits, it traverses the body of the 30S subunit contacting proteins on the other side and probably holding the rRNA structure together. The combined cluster of proteins S8, S12 and S17 appears to hold together the shoulder and platform of the 30S subunit. The polypeptide is Small ribosomal subunit protein uS12 (Methylobacterium nodulans (strain LMG 21967 / CNCM I-2342 / ORS 2060)).